We begin with the raw amino-acid sequence, 388 residues long: L-arabinitol 4-dehydrogenase (388 aa).

Residues Cys55, His80, Glu81, Cys110, Cys113, Cys116, Cys124, and Glu165 each contribute to the Zn(2+) site. Residues Pro192–Ile193, Asp213, Arg218, Ile293, and Gln317–Arg319 contribute to the NAD(+) site.

It belongs to the zinc-containing alcohol dehydrogenase family. Homotetramer. The cofactor is Zn(2+).

It catalyses the reaction L-arabinitol + NAD(+) = L-xylulose + NADH + H(+). The protein operates within carbohydrate degradation; L-arabinose degradation via L-arabinitol; D-xylulose 5-phosphate from L-arabinose (fungal route): step 2/5. Functionally, catalyzes the NAD-dependent oxidation of L-arabinitol to L-xylulose in the fungal L-arabinose catabolic pathway. L-arabinose catabolism is important for using plant material as a carbon source. NADP cannot act as a cosubstrate. The polypeptide is L-arabinitol 4-dehydrogenase (lad) (Talaromyces emersonii (Thermophilic fungus)).